The sequence spans 558 residues: 2-isopropylmalate synthase (558 aa).

In terms of domain architecture, Pyruvate carboxyltransferase spans 30 to 303 (PIWCSVDLRD…DPKLDCSDIE (274 aa)). 4 residues coordinate Mg(2+): aspartate 39, histidine 242, histidine 244, and asparagine 278. The tract at residues 437–558 (QPGARIKFVD…ANRVLDVVGK (122 aa)) is regulatory domain.

Belongs to the alpha-IPM synthase/homocitrate synthase family. LeuA type 2 subfamily. As to quaternary structure, homodimer. Mg(2+) is required as a cofactor.

It is found in the cytoplasm. It carries out the reaction 3-methyl-2-oxobutanoate + acetyl-CoA + H2O = (2S)-2-isopropylmalate + CoA + H(+). It participates in amino-acid biosynthesis; L-leucine biosynthesis; L-leucine from 3-methyl-2-oxobutanoate: step 1/4. Catalyzes the condensation of the acetyl group of acetyl-CoA with 3-methyl-2-oxobutanoate (2-ketoisovalerate) to form 3-carboxy-3-hydroxy-4-methylpentanoate (2-isopropylmalate). This is 2-isopropylmalate synthase from Rhizobium meliloti (strain 1021) (Ensifer meliloti).